The following is a 535-amino-acid chain: Succinate-semialdehyde dehydrogenase, mitochondrial (535 aa).

Residues 1–47 (MATCFWLRSCGARRLGSTFPGCRLRPRAGGLVPASGPAPGPAQLRCY) constitute a mitochondrion transit peptide. K126 bears the N6-acetyllysine; alternate mark. K126 bears the N6-succinyllysine; alternate mark. An N6-succinyllysine mark is found at K135 and K184. Residues R213 and 228–231 (KPAE) each bind NAD(+). Position 213 (R213) interacts with substrate. The residue at position 265 (K265) is an N6-acetyllysine; alternate. K265 is modified (N6-succinyllysine; alternate). 284 to 289 (GSTTTG) contributes to the NAD(+) binding site. E306 (proton acceptor) is an active-site residue. Residue R334 participates in substrate binding. C340 functions as the Nucleophile in the catalytic mechanism. A disulfide bridge links C340 with C342. K365 carries the N6-acetyllysine modification. K402 bears the N6-succinyllysine mark. At K411 the chain carries N6-acetyllysine. S498 contributes to the substrate binding site. S499 carries the post-translational modification Phosphoserine.

Belongs to the aldehyde dehydrogenase family. As to quaternary structure, homotetramer.

The protein resides in the mitochondrion. The catalysed reaction is succinate semialdehyde + NAD(+) + H2O = succinate + NADH + 2 H(+). It functions in the pathway amino-acid degradation; 4-aminobutanoate degradation. With respect to regulation, redox-regulated. Inhibited under oxydizing conditions. Functionally, catalyzes one step in the degradation of the inhibitory neurotransmitter gamma-aminobutyric acid (GABA). This chain is Succinate-semialdehyde dehydrogenase, mitochondrial (ALDH5A1), found in Hylobates lar (Lar gibbon).